A 175-amino-acid chain; its full sequence is Thioredoxin M-type, chloroplastic (175 aa).

Residues 1–62 (MALETCLRGW…ARRPSRFVCK (62 aa)) constitute a chloroplast transit peptide. One can recognise a Thioredoxin domain in the interval 63 to 174 (CKNVVDEVIV…LCTIIDKYIG (112 aa)). Cysteines 98 and 101 form a disulfide.

The protein belongs to the thioredoxin family. Plant M-type subfamily. As to quaternary structure, forms a complex with heterodimeric ferredoxin-thioredoxin reductase (FTR) and ferredoxin.

The protein localises to the plastid. The protein resides in the chloroplast. In terms of biological role, participates in various redox reactions through the reversible oxidation of the active center dithiol to a disulfide. The M form is known to activate NADP-malate dehydrogenase. The chain is Thioredoxin M-type, chloroplastic from Triticum aestivum (Wheat).